A 217-amino-acid chain; its full sequence is Small ribosomal subunit protein uS5 (217 aa).

Residues 49–112 (LEEKVLDVKL…AQAKKNIIRV (64 aa)) enclose the S5 DRBM domain.

The protein belongs to the universal ribosomal protein uS5 family. As to quaternary structure, part of the 30S ribosomal subunit. Contacts protein S4.

With S4 and S12 plays an important role in translational accuracy. In Methanocaldococcus jannaschii (strain ATCC 43067 / DSM 2661 / JAL-1 / JCM 10045 / NBRC 100440) (Methanococcus jannaschii), this protein is Small ribosomal subunit protein uS5.